Consider the following 155-residue polypeptide: Ribosomal RNA large subunit methyltransferase H (155 aa).

Residues L72, G104, and 123–128 (LSRMTF) contribute to the S-adenosyl-L-methionine site.

Belongs to the RNA methyltransferase RlmH family. Homodimer.

It localises to the cytoplasm. The enzyme catalyses pseudouridine(1915) in 23S rRNA + S-adenosyl-L-methionine = N(3)-methylpseudouridine(1915) in 23S rRNA + S-adenosyl-L-homocysteine + H(+). Its function is as follows. Specifically methylates the pseudouridine at position 1915 (m3Psi1915) in 23S rRNA. The chain is Ribosomal RNA large subunit methyltransferase H from Kosmotoga olearia (strain ATCC BAA-1733 / DSM 21960 / TBF 19.5.1).